Here is a 320-residue protein sequence, read N- to C-terminus: Protein PXR1 (320 aa).

The span at 1–11 (MGLAGPRKRTK) shows a compositional bias: basic residues. The disordered stretch occupies residues 1 to 24 (MGLAGPRKRTKISHDPNNTAWSRS). A compositionally biased stretch (polar residues) spans 15–24 (DPNNTAWSRS). A G-patch domain is found at 25 to 79 (TSGYGHKIMSAQGWTPGSFLGASNAAHADHFTAGSAGHIRVILKDDNLGLGAKLR). The interval 152–298 (GEEVQTPQIS…MGRQFTRGRH (147 aa)) is disordered. A compositionally biased stretch (basic residues) spans 169–182 (KRPKKARKKEKRRA). 3 stretches are compositionally biased toward basic and acidic residues: residues 203 to 214 (RKENKEKKKSSD), 243 to 256 (KDPE…HDDS), and 269 to 288 (QESR…EHRP).

Belongs to the PINX1 family.

It is found in the nucleus. The protein resides in the nucleolus. Its function is as follows. Involved in rRNA-processing at A0, A1 and A2 sites and negatively regulates telomerase. The sequence is that of Protein PXR1 (PXR1) from Ajellomyces capsulatus (strain NAm1 / WU24) (Darling's disease fungus).